The primary structure comprises 138 residues: DNA-directed RNA polymerase subunit omega (138 aa).

Belongs to the RNA polymerase subunit omega family. The RNAP catalytic core consists of 2 alpha, 1 beta, 1 beta' and 1 omega subunit. When a sigma factor is associated with the core the holoenzyme is formed, which can initiate transcription.

It catalyses the reaction RNA(n) + a ribonucleoside 5'-triphosphate = RNA(n+1) + diphosphate. Its function is as follows. Promotes RNA polymerase assembly. Latches the N- and C-terminal regions of the beta' subunit thereby facilitating its interaction with the beta and alpha subunits. The protein is DNA-directed RNA polymerase subunit omega of Thermodesulfovibrio yellowstonii (strain ATCC 51303 / DSM 11347 / YP87).